Consider the following 418-residue polypeptide: Serum response factor homolog A (418 aa).

Disordered stretches follow at residues 14–67, 144–170, 301–351, and 388–418; these read LGNV…GKKA, CLNTPDNPNSPSMANQNSNNNSNLLQQ, RLGK…NNNS, and SSSSASSSPASPNQFNYSNHSMPLNNQFPPC. 2 stretches are compositionally biased toward low complexity: residues 22-39 and 51-61; these read PSSPTSTSSSSSLTPTST and TSEPSSPSTGE. One can recognise an MADS-box domain in the interval 67–127; sequence AGRRKIKIEF…GHVYTFATAK (61 aa). Low complexity-rich tracts occupy residues 150-170, 306-351, and 388-399; these read NPNSPSMANQNSNNNSNLLQQ, NNNN…NNNS, and SSSSASSSPASP. A compositionally biased stretch (polar residues) spans 400-418; that stretch reads NQFNYSNHSMPLNNQFPPC.

It localises to the nucleus. Required for proper slug migration, spore differentiation and stalk differentiation (under nonbuffered conditions). Could be involved in late events of spore maturation necessary for spore stability. This Dictyostelium discoideum (Social amoeba) protein is Serum response factor homolog A (srfA).